We begin with the raw amino-acid sequence, 506 residues long: 5'-3' exonuclease PLD4 (506 aa).

A helical membrane pass occupies residues 31–51 (LQVLGALAVLWLGSVALICLL). Cysteines 94 and 250 form a disulfide. Residues Asn150 and Asn171 are each glycosylated (N-linked (GlcNAc...) asparagine). Residues 209–236 (TRGVLHSKFWVVDGRHIYMGSANMDWRS) form the PLD phosphodiesterase 1 domain. His214 functions as the Proton donor in the catalytic mechanism. Active-site residues include Lys216 and Asp221. N-linked (GlcNAc...) asparagine glycosylation is found at Asn249, Asn281, Asn403, Asn417, and Asn427. Cys379 and Cys502 are oxidised to a cystine. The region spanning 423-449 (FSRVNHSKFMVTEKAAYIGTSNWSEDY) is the PLD phosphodiesterase 2 domain. Catalysis depends on His428, which acts as the Nucleophile. Asn444 carries N-linked (GlcNAc...) asparagine glycosylation.

Belongs to the phospholipase D family. As to quaternary structure, homodimer. In terms of processing, highly N-glycosylated. As to expression, expressed in plasmacytoid dendritic cells and monocytes (at protein level).

Its subcellular location is the endoplasmic reticulum membrane. The protein resides in the golgi apparatus. It localises to the trans-Golgi network membrane. It is found in the nucleus. The protein localises to the early endosome. Its subcellular location is the cytoplasmic vesicle. The protein resides in the phagosome. It localises to the lysosome. The catalysed reaction is Exonucleolytic cleavage in the 5'- to 3'-direction to yield nucleoside 3'-phosphates.. The enzyme catalyses a 5'-end 5'-dephospho-ribonucleotidyl-ribonucleotide-RNA + H2O = a ribonucleoside 3'-phosphate + a 5'-end dephospho-ribonucleoside-RNA + H(+). It carries out the reaction a ribonucleoside 3'-phosphate-2'-3'-cyclophospho-GMP + H2O = a ribonucleoside 3'-phosphate + 2',3'-cyclophospho-GMP + H(+). It catalyses the reaction a 5'-end 5'-dephospho-2'-deoxyribonucleotidyl-2'-deoxyribonucleotide in single-stranded DNA + H2O = a 5'-end dephospho-2'-deoxyribonucleoside in single-stranded DNA + a 2'-deoxyribonucleoside 3'-phosphate + H(+). The catalysed reaction is a 5'-end 5'-phospho-2'-deoxyribonucleotide in single-stranded DNA + H2O = a 5'-end 5'-dephospho-2'-deoxyribonucleotide in single-stranded DNA + phosphate. The enzyme catalyses a 3-lyso-sn-glycero-1-phospho-(3'-acyl-1'-sn-glycerol) + a 1-acyl-sn-glycerol = a 3-acyl-sn-glycero-1-phospho-(3'-acyl-1'-sn-glycerol) + glycerol. It carries out the reaction 3-lyso-sn-glycero-1-phospho-(3'-(9Z-octadecenoyl)-1'-sn-glycerol) + 1-(9Z-octadecenoyl)-sn-glycerol = 3-(9Z-octadecenoyl)-sn-glycero-1-phospho-(3'-(9Z-octadecenoyl)-1'-sn-glycerol) + glycerol. With respect to regulation, the exonuclease activity toward ssDNA substrate is Ca(2+) and Mg(2+)-independent, but it is inhibited by Fe(2+), Cu(2+) and to a lesser extent Zn(2+) ions. Functionally, 5'-&gt;3' exonuclease that hydrolyzes the phosphodiester bond of single-stranded DNA (ssDNA) and RNA molecules to form nucleoside 3'-monophosphates and 5'-end 5'-hydroxy deoxyribonucleotide/ribonucleotide fragments. Partially redundant with PLD3, can cleave all four nucleotides displaying higher efficiency for ssDNA and RNA fragments initiated with uridine and guanosine residues and lower efficiency for cytidine-initiated substrates. As a result, it does not always degrade polynucleotides to the single nucleotide level, it can stall at specific sites sparing certain fragments from exonucleolytic degradation. Processes self and pathogenic ssDNA and RNA molecules that reach the endolysosomal compartment via phagocytosis or autophagy and may serve as 'danger' signals for recognition by innate immune receptors such as toll-like receptors (TLRs). Degrades mitochondrial CpG-rich ssDNA fragments to prevent TLR9 activation and autoinflammatory response, but it can cleave viral RNA to generate ligands for TLR7 activation and initiate antiviral immune responses. In plasmacytoid dendritic cells, it cooperates with endonuclease RNASET2 to release 2',3'-cyclic guanosine monophosphate (2',3'-cGMP), a potent stimulatory ligand for TLR7. Produces 2',3'-cGMPs and cytidine-rich RNA fragments that occupy TLR7 ligand-binding pockets and trigger a signaling-competent state. Can exert polynucleotide phosphatase activity toward 5'-phosphorylated ssDNA substrates although at a slow rate. Transphosphatidylase that catalyzes the exchange with R to S stereo-inversion of the glycerol moiety between (S,R)-lysophosphatidylglycerol (LPG) and monoacylglycerol (MAG) substrates to yield (S,S)-bis(monoacylglycero)phosphate (BMP). Can synthesize a variety of (S,S)-BMPs representing the main phospholipid constituent of lysosomal intralumenal vesicle (ILV) membranes that bind acid hydrolases for lipid degradation. Regulates the homeostasis and interorganellar communication of the endolysosomal system with an overall impact on cellular removal of dysfunctional organelles via autophagy as well as proper protein and lipid turnover. May play a role in myotube formation in response to ER stress. This is 5'-3' exonuclease PLD4 from Homo sapiens (Human).